The following is a 349-amino-acid chain: Protein Wnt-7b (349 aa).

Residues 1–24 form the signal peptide; sequence MHRNFRKWIFYVFLCFGVLYVKLG. Intrachain disulfides connect cysteine 73-cysteine 84, cysteine 123-cysteine 131, cysteine 133-cysteine 152, cysteine 200-cysteine 214, and cysteine 202-cysteine 209. 2 N-linked (GlcNAc...) asparagine glycosylation sites follow: asparagine 83 and asparagine 127. Serine 206 carries the O-palmitoleoyl serine; by PORCN lipid modification. Positions 238 to 266 are disordered linker; it reads VEVVRASRLRQPTFLRIKQLRSYQKPMET. Disulfide bonds link cysteine 278–cysteine 309, cysteine 294–cysteine 304, cysteine 308–cysteine 348, cysteine 324–cysteine 339, cysteine 326–cysteine 336, and cysteine 331–cysteine 332. A glycan (N-linked (GlcNAc...) asparagine) is linked at asparagine 295.

Belongs to the Wnt family. In terms of assembly, forms a soluble 1:1 complex with AFM; this prevents oligomerization and is required for prolonged biological activity. The complex with AFM may represent the physiological form in body fluids. Interacts with FZD1 and FZD10. Interacts with FZD4 (in vitro). Interacts with PORCN. Interacts with glypican GPC3. Interacts (via intrinsically disordered linker region) with RECK; interaction with RECK confers ligand selectivity for Wnt7 in brain endothelial cells and allows these cells to selectively respond to Wnt7. In terms of processing, palmitoleoylation is required for efficient binding to frizzled receptors. Depalmitoleoylation leads to Wnt signaling pathway inhibition. As to expression, moderately expressed in fetal brain, weakly expressed in fetal lung and kidney, and faintly expressed in adult brain, lung and prostate.

The protein resides in the secreted. It localises to the extracellular space. It is found in the extracellular matrix. In terms of biological role, ligand for members of the frizzled family of seven transmembrane receptors that functions in the canonical Wnt/beta-catenin signaling pathway. Required for normal fusion of the chorion and the allantois during placenta development. Required for central nervous system (CNS) angiogenesis and blood-brain barrier regulation. The protein is Protein Wnt-7b (WNT7B) of Homo sapiens (Human).